A 133-amino-acid polypeptide reads, in one-letter code: uncharacterized protein (133 aa).

The protein belongs to the mimivirus L87/L94 family.

This is an uncharacterized protein from Acanthamoeba polyphaga mimivirus (APMV).